The following is a 468-amino-acid chain: UDP-N-acetylmuramoyl-L-alanine--L-glutamate ligase (468 aa).

122-128 (GTKGKST) contacts ATP.

It belongs to the MurCDEF family. MurD2 subfamily.

The protein localises to the cytoplasm. The enzyme catalyses UDP-N-acetyl-alpha-D-muramoyl-L-alanine + L-glutamate + ATP = UDP-N-acetyl-alpha-D-muramoyl-L-alanyl-L-glutamate + ADP + phosphate + H(+). The protein operates within cell wall biogenesis; peptidoglycan biosynthesis. Its function is as follows. Cell wall formation. Catalyzes the addition of L-glutamate to the nucleotide precursor UDP-N-acetylmuramoyl-L-alanine. The sequence is that of UDP-N-acetylmuramoyl-L-alanine--L-glutamate ligase from Xylella fastidiosa (strain 9a5c).